The following is a 372-amino-acid chain: E3 ubiquitin-protein ligase RNF34 (372 aa).

The segment at 56-107 (EGPNIVCKACGLSFSVFRKKHVCCDCKKDFCSVCSVLQENLRRCSTCHLLQE) adopts an FYVE-type zinc-finger fold. In terms of domain architecture, SAP 1 spans 115–134 (LMRLKVKDLRQYLILRNIPI). Phosphoserine is present on Ser169. The segment at 194–253 (QGELMDGDQTSRSGVPAQVQSEITSANTEDDDDDDDEDDDDEEENAEDRNPGLSKERVRA) is disordered. Over residues 201-220 (DQTSRSGVPAQVQSEITSAN) the composition is skewed to polar residues. Residues 221-239 (TEDDDDDDDEDDDDEEENA) show a composition bias toward acidic residues. Positions 240–252 (EDRNPGLSKERVR) are enriched in basic and acidic residues. Ser254 and Ser256 each carry phosphoserine. Residues 264–278 (VEGMSVRQLKEILAR) form the SAP 2 domain. The RING-type zinc finger occupies 325–360 (CRICMDAVIDCVLLECGHMVTCTKCGKRMSECPICR).

In terms of assembly, interacts with CASP8 and CASP10. Interacts (via RING-type zinc finger) with PPARGC1A. Interacts with NOD1. Interacts with p53/TP53; involved in p53/TP53 ubiquitination. Interacts (via RING-type zinc finger) with MDM2; the interaction stabilizes MDM2. In terms of processing, autoubiquitinated (in vitro). Proteolytically cleaved by caspases upon induction of apoptosis by TNF. In terms of tissue distribution, ubiquitous. Detected in heart, brain, liver, skeletal muscle, kidney, pancreas, spleen, thymus, prostate, testis, ovary, colon and leukocytes.

It localises to the cell membrane. It is found in the endomembrane system. The protein localises to the nucleus. The protein resides in the nucleus speckle. Its subcellular location is the cytoplasm. It localises to the cytosol. It carries out the reaction S-ubiquitinyl-[E2 ubiquitin-conjugating enzyme]-L-cysteine + [acceptor protein]-L-lysine = [E2 ubiquitin-conjugating enzyme]-L-cysteine + N(6)-ubiquitinyl-[acceptor protein]-L-lysine.. It participates in protein modification; protein ubiquitination. Its function is as follows. E3 ubiquitin-protein ligase that regulates several biological processes through the ubiquitin-mediated proteasomal degradation of various target proteins. Ubiquitinates the caspases CASP8 and CASP10, promoting their proteasomal degradation, to negatively regulate cell death downstream of death domain receptors in the extrinsic pathway of apoptosis. May mediate 'Lys-48'-linked polyubiquitination of RIPK1 and its subsequent proteasomal degradation thereby indirectly regulating the tumor necrosis factor-mediated signaling pathway. Negatively regulates p53/TP53 through its direct ubiquitination and targeting to proteasomal degradation. Indirectly, may also negatively regulate p53/TP53 through ubiquitination and degradation of SFN. Mediates PPARGC1A proteasomal degradation probably through ubiquitination thereby indirectly regulating the metabolism of brown fat cells. Possibly involved in innate immunity, through 'Lys-48'-linked polyubiquitination of NOD1 and its subsequent proteasomal degradation. This chain is E3 ubiquitin-protein ligase RNF34, found in Homo sapiens (Human).